The following is a 292-amino-acid chain: Nanos homolog 1 (292 aa).

2 disordered regions span residues 1–41 and 68–121; these read MEAF…QPFS and GGNG…SRGR. The interval 40 to 56 is essential for its translational repressor activity; that stretch reads FSSWNDYLGLATLITKA. Positions 76–87 are enriched in low complexity; the sequence is PPSSSSSSCCSP. Over residues 104 to 115 the composition is skewed to acidic residues; the sequence is DYDEDDDDDSDE. Residues 213-267 form a Nanos-type zinc finger; the sequence is VCVFCRNNKEAMALYTTHILKGPDGRVLCPVLRRYTCPLCGASGDNAHTIKYCPL. Zn(2+) contacts are provided by C214, C217, H230, C241, C249, C252, H260, and C265. 2 short sequence motifs (C2HC) span residues 214 to 241 and 249 to 265; these read CVFC…RVLC and CPLC…IKYC. Residues 268-292 form a disordered region; the sequence is SKVPPPPARPPPRSARDGPPGKKLR. The segment covering 269–280 has biased composition (pro residues); sequence KVPPPPARPPPR. The span at 281-292 shows a compositional bias: basic and acidic residues; sequence SARDGPPGKKLR.

This sequence belongs to the nanos family. Interacts with PUM2, SNAPIN and CTNNB1. Interacts (via N-terminal region) with CTNND1. Interacts with DDX20 (via N-terminal region). As to expression, testis and ovary (at protein level). Predominantly expressed in testis. Specifically expressed during germline development. In adult tissues, it is mainly expressed in spermatogonia, the stem cells of the germline. Also expressed during meiosis in spermatocytes. Not present in late, post-meiotic stage germ cells. Expressed in fetal ovaries, while it is weakly or not expressed in mature postmeiotic oocytes, suggesting that it may be expressed in premeiotic female germ cells. Expressed at high levels only in the E-cadherin deficient cell lines. Highly expressed in lung carcinomas and mostly detected in invasive tumor cells and its expression correlates with tumor aggressiveness.

It is found in the cytoplasm. The protein resides in the perinuclear region. Functionally, may act as a translational repressor which regulates translation of specific mRNAs by forming a complex with PUM2 that associates with the 3'-UTR of mRNA targets. Capable of interfering with the proadhesive and anti-invasive functions of E-cadherin. Up-regulates the production of MMP14 to promote tumor cell invasion. This Homo sapiens (Human) protein is Nanos homolog 1 (NANOS1).